The chain runs to 689 residues: Protein SDA1 homolog (689 aa).

Positions Lys-254–Asp-319 form a coiled coil. Disordered regions lie at residues Glu-485–Trp-512 and Lys-606–Lys-689. The segment covering Ser-668 to Leu-681 has biased composition (basic and acidic residues).

It belongs to the SDA1 family.

The protein resides in the nucleus. It localises to the nucleolus. Functionally, required for 60S pre-ribosomal subunits export to the cytoplasm. This is Protein SDA1 homolog (sdad1) from Xenopus tropicalis (Western clawed frog).